A 317-amino-acid chain; its full sequence is Malate dehydrogenase (317 aa).

Residues 15–20 (GSGNIG) and Asp39 contribute to the NAD(+) site. Substrate-binding residues include Arg88 and Arg94. NAD(+)-binding positions include Asn101 and 124–126 (VTN). Substrate contacts are provided by Asn126 and Arg157. The active-site Proton acceptor is the His181.

This sequence belongs to the LDH/MDH superfamily. MDH type 3 family.

The enzyme catalyses (S)-malate + NAD(+) = oxaloacetate + NADH + H(+). In terms of biological role, catalyzes the reversible oxidation of malate to oxaloacetate. This chain is Malate dehydrogenase, found in Ehrlichia ruminantium (strain Gardel).